Here is a 163-residue protein sequence, read N- to C-terminus: MAATPLPPLRLAIACDDAGVSYKEALKAHLSDNPLVSSITDVGVTSTTDKTAYPHVAIQAAQLIKDGKVDRALMICGTGLGVAISANKVPGIRAVTAHDTFSVERAILSNDAQVLCFGQRVIGIELAKRLAGEWLTYRFDQKSASAQKVQAISDYEKKFVEVN.

16–17 contributes to the D-ribulose 5-phosphate binding site; that stretch reads DD. Cys-76 acts as the Proton acceptor in catalysis. Residues 77 to 81, Asn-110, Arg-120, and Lys-148 each bind D-ribulose 5-phosphate; that span reads GTGLG.

Belongs to the LacAB/RpiB family. As to quaternary structure, homodimer or homotetramer.

The polypeptide is Putative ribose 5-phosphate isomerase (Coccidioides immitis (strain RS) (Valley fever fungus)).